A 201-amino-acid polypeptide reads, in one-letter code: ATP-dependent Clp protease proteolytic subunit (201 aa).

The Nucleophile role is filled by S103. H128 is an active-site residue.

The protein belongs to the peptidase S14 family. Fourteen ClpP subunits assemble into 2 heptameric rings which stack back to back to give a disk-like structure with a central cavity, resembling the structure of eukaryotic proteasomes.

Its subcellular location is the cytoplasm. It catalyses the reaction Hydrolysis of proteins to small peptides in the presence of ATP and magnesium. alpha-casein is the usual test substrate. In the absence of ATP, only oligopeptides shorter than five residues are hydrolyzed (such as succinyl-Leu-Tyr-|-NHMec, and Leu-Tyr-Leu-|-Tyr-Trp, in which cleavage of the -Tyr-|-Leu- and -Tyr-|-Trp bonds also occurs).. In terms of biological role, cleaves peptides in various proteins in a process that requires ATP hydrolysis. Has a chymotrypsin-like activity. Plays a major role in the degradation of misfolded proteins. The protein is ATP-dependent Clp protease proteolytic subunit of Bordetella avium (strain 197N).